Here is a 287-residue protein sequence, read N- to C-terminus: 4-diphosphocytidyl-2-C-methyl-D-erythritol kinase (287 aa).

Lysine 10 is an active-site residue. 94 to 104 provides a ligand contact to ATP; the sequence is PVAAGLGGGSA. Aspartate 136 is a catalytic residue.

Belongs to the GHMP kinase family. IspE subfamily.

The enzyme catalyses 4-CDP-2-C-methyl-D-erythritol + ATP = 4-CDP-2-C-methyl-D-erythritol 2-phosphate + ADP + H(+). It functions in the pathway isoprenoid biosynthesis; isopentenyl diphosphate biosynthesis via DXP pathway; isopentenyl diphosphate from 1-deoxy-D-xylulose 5-phosphate: step 3/6. In terms of biological role, catalyzes the phosphorylation of the position 2 hydroxy group of 4-diphosphocytidyl-2C-methyl-D-erythritol. The protein is 4-diphosphocytidyl-2-C-methyl-D-erythritol kinase of Pelotomaculum thermopropionicum (strain DSM 13744 / JCM 10971 / SI).